The sequence spans 147 residues: Hemoglobin subunit gamma-1 (147 aa).

A Globin domain is found at 3–147 (NFTAEDKAAI…VASALGSRYH (145 aa)). Thr-13 carries the phosphothreonine modification. Residues Ser-45, Ser-51, and Ser-53 each carry the phosphoserine modification. Residue Lys-60 is modified to N6-acetyllysine. Heme b is bound at residue His-64. At Lys-83 the chain carries N6-acetyllysine. His-93 provides a ligand contact to heme b. Residue Cys-94 is modified to S-nitrosocysteine. Residue Ser-140 is modified to Phosphoserine.

The protein belongs to the globin family. Heterotetramer of two alpha chains and two gamma chains in fetal hemoglobin (Hb F). As to expression, red blood cells.

Its function is as follows. Gamma chains make up the fetal hemoglobin F, in combination with alpha chains. The sequence is that of Hemoglobin subunit gamma-1 (HBG1) from Plecturocebus moloch (Dusky titi monkey).